Reading from the N-terminus, the 105-residue chain is UPF0235 protein CT1832 (105 aa).

Belongs to the UPF0235 family.

This Chlorobaculum tepidum (strain ATCC 49652 / DSM 12025 / NBRC 103806 / TLS) (Chlorobium tepidum) protein is UPF0235 protein CT1832.